We begin with the raw amino-acid sequence, 338 residues long: 1-aminocyclopropane-1-carboxylate deaminase (338 aa).

Position 51 is an N6-(pyridoxal phosphate)lysine (Lys-51). Residue Ser-78 is the Nucleophile of the active site.

Belongs to the ACC deaminase/D-cysteine desulfhydrase family. As to quaternary structure, homotrimer. Pyridoxal 5'-phosphate is required as a cofactor.

The enzyme catalyses 1-aminocyclopropane-1-carboxylate + H2O = 2-oxobutanoate + NH4(+). Functionally, catalyzes a cyclopropane ring-opening reaction, the irreversible conversion of 1-aminocyclopropane-1-carboxylate (ACC) to ammonia and alpha-ketobutyrate. Allows growth on ACC as a nitrogen source. The protein is 1-aminocyclopropane-1-carboxylate deaminase of Burkholderia pseudomallei (strain 1106a).